The following is a 548-amino-acid chain: MVQDRKVLDALDTAKTQWYHFTAVVIAGMGFFTDAYDLFSISLVTKLLGRIYYFNPASKSPGSLPPNVSAAVNGVAFCGTLAGQLFFGWLGDKMGRKKVYGMTLMLMVICCLASGLSFGSSAKGVMATLCFFRFWLGFGIGGDYPLSATIMSEYANKRTRGAFIAAVFAMQGFGNLTGGIVAIIVSAAFKLRFDAPAYRDDRAGSTVPQADYAWRIVLMFGAIPALLTYYWRMKMPETARYTALVAKNDKKAAADMARVLNVELVDEQEKAAAATAAAAEEEAARREQYGLFSREFARRHGHHLLGTTVCWFVLDIAYYSQNLFQKDIYTAVQWLPKADTMSALEEMFKISRAQTLVALCGTIPGYWFTVLFIDIVGRFAIQLGGFFLMTAFMLGLAVPYHHWTTPGNHVGFVVMYAFTFFFANFGPNSTTFIVPAEIFPARLRSTCHGISSAAGKMGAIVGSFGFLYAAQSTDPSKTDAGYPRGIGVRNSLFLLAGCNVVGFLFTFLVPESKGKSLEELSGENEMEAEPAAATNSYRQTVPDSGQSE.

Residues 1 to 23 (MVQDRKVLDALDTAKTQWYHFTA) lie on the Cytoplasmic side of the membrane. The chain crosses the membrane as a helical span at residues 24 to 44 (VVIAGMGFFTDAYDLFSISLV). Residues 45–69 (TKLLGRIYYFNPASKSPGSLPPNVS) are Extracellular-facing. Residues 70 to 90 (AAVNGVAFCGTLAGQLFFGWL) traverse the membrane as a helical segment. The Cytoplasmic segment spans residues 91–98 (GDKMGRKK). A helical transmembrane segment spans residues 99-119 (VYGMTLMLMVICCLASGLSFG). Topologically, residues 120 to 123 (SSAK) are extracellular. Residues 124–144 (GVMATLCFFRFWLGFGIGGDY) traverse the membrane as a helical segment. At 145-163 (PLSATIMSEYANKRTRGAF) the chain is on the cytoplasmic side. Residues 164–184 (IAAVFAMQGFGNLTGGIVAII) traverse the membrane as a helical segment. Over 185-210 (VSAAFKLRFDAPAYRDDRAGSTVPQA) the chain is Extracellular. Residues 211–231 (DYAWRIVLMFGAIPALLTYYW) form a helical membrane-spanning segment. Over 232 to 303 (RMKMPETARY…REFARRHGHH (72 aa)) the chain is Cytoplasmic. A helical transmembrane segment spans residues 304-324 (LLGTTVCWFVLDIAYYSQNLF). Residues 325–355 (QKDIYTAVQWLPKADTMSALEEMFKISRAQT) lie on the Extracellular side of the membrane. A helical transmembrane segment spans residues 356–376 (LVALCGTIPGYWFTVLFIDIV). At 377-378 (GR) the chain is on the cytoplasmic side. Residues 379-399 (FAIQLGGFFLMTAFMLGLAVP) form a helical membrane-spanning segment. The Extracellular segment spans residues 400–405 (YHHWTT). The helical transmembrane segment at 406–426 (PGNHVGFVVMYAFTFFFANFG) threads the bilayer. Residues 427-449 (PNSTTFIVPAEIFPARLRSTCHG) lie on the Cytoplasmic side of the membrane. A helical transmembrane segment spans residues 450 to 470 (ISSAAGKMGAIVGSFGFLYAA). The Extracellular segment spans residues 471-490 (QSTDPSKTDAGYPRGIGVRN). Residues 491-511 (SLFLLAGCNVVGFLFTFLVPE) form a helical membrane-spanning segment. Topologically, residues 512–548 (SKGKSLEELSGENEMEAEPAAATNSYRQTVPDSGQSE) are cytoplasmic. The disordered stretch occupies residues 518–548 (EELSGENEMEAEPAAATNSYRQTVPDSGQSE). Polar residues predominate over residues 533 to 548 (ATNSYRQTVPDSGQSE).

The protein belongs to the major facilitator superfamily. Phosphate:H(+) symporter (TC 2.A.1.9) family. Expressed at low levels in roots.

It localises to the membrane. In terms of biological role, high-affinity transporter for external inorganic phosphate. This Oryza sativa subsp. japonica (Rice) protein is Probable inorganic phosphate transporter 1-5 (PHT1-5).